The chain runs to 346 residues: Selenide, water dikinase (346 aa).

The active site involves selenocysteine 16. Residue selenocysteine 16 is a non-standard amino acid, selenocysteine. Residues lysine 19 and 47–49 each bind ATP; that span reads TAD. Aspartate 50 provides a ligand contact to Mg(2+). ATP contacts are provided by residues aspartate 67, aspartate 90, and 138-140; that span reads GHS. A Mg(2+)-binding site is contributed by aspartate 90. Aspartate 226 contacts Mg(2+).

The protein belongs to the selenophosphate synthase 1 family. Class I subfamily. As to quaternary structure, homodimer. Requires Mg(2+) as cofactor.

It carries out the reaction hydrogenselenide + ATP + H2O = selenophosphate + AMP + phosphate + 2 H(+). In terms of biological role, synthesizes selenophosphate from selenide and ATP. This chain is Selenide, water dikinase, found in Haemophilus ducreyi (strain 35000HP / ATCC 700724).